A 3118-amino-acid polypeptide reads, in one-letter code: Laminin subunit alpha-2 (3118 aa).

The N-terminal stretch at 1–19 is a signal peptide; the sequence is MPAATAGILLLLLLGTLEG. Residues 31–282 enclose the Laminin N-terminal domain; sequence QQRGLFPAVL…SVKDISVGGM (252 aa). 2 N-linked (GlcNAc...) asparagine glycosylation sites follow: asparagine 51 and asparagine 85. 6 cysteine pairs are disulfide-bonded: cysteine 283–cysteine 292, cysteine 285–cysteine 303, cysteine 305–cysteine 314, cysteine 317–cysteine 337, cysteine 340–cysteine 349, and cysteine 342–cysteine 374. Laminin EGF-like domains follow at residues 283–339, 340–409, 410–464, and 465–513; these read CICY…ECEA, CNCH…PCQP, CHCD…DCQP, and CNCS…GCEE. The N-linked (GlcNAc...) asparagine glycan is linked to asparagine 299. Residues asparagine 359 and asparagine 376 are each glycosylated (N-linked (GlcNAc...) asparagine). 10 disulfides stabilise this stretch: cysteine 377/cysteine 386, cysteine 389/cysteine 407, cysteine 410/cysteine 422, cysteine 412/cysteine 438, cysteine 440/cysteine 449, cysteine 452/cysteine 462, cysteine 465/cysteine 478, cysteine 467/cysteine 482, cysteine 484/cysteine 493, and cysteine 496/cysteine 511. Asparagine 466 carries an N-linked (GlcNAc...) asparagine glycan. Residues 514 to 523 form the Laminin EGF-like 5; first part domain; it reads CFCSGVSNRC. The region spanning 527-719 is the Laminin IV type A 1 domain; that stretch reads YWTYGNIQDM…DRRIATDVEV (193 aa). Positions 720 to 752 constitute a Laminin EGF-like 5; second part domain; sequence CQCPPGYSGSSCETCWPRHRRVNGTIFGGICEP. A glycan (N-linked (GlcNAc...) asparagine) is linked at asparagine 742. 32 disulfide bridges follow: cysteine 753–cysteine 762, cysteine 755–cysteine 769, cysteine 772–cysteine 781, cysteine 784–cysteine 800, cysteine 803–cysteine 818, cysteine 805–cysteine 828, cysteine 831–cysteine 840, cysteine 843–cysteine 858, cysteine 861–cysteine 875, cysteine 863–cysteine 882, cysteine 885–cysteine 894, cysteine 897–cysteine 911, cysteine 914–cysteine 926, cysteine 916–cysteine 933, cysteine 935–cysteine 944, cysteine 947–cysteine 960, cysteine 963–cysteine 975, cysteine 965–cysteine 981, cysteine 983–cysteine 992, cysteine 995–cysteine 1007, cysteine 1010–cysteine 1019, cysteine 1012–cysteine 1026, cysteine 1028–cysteine 1037, cysteine 1040–cysteine 1053, cysteine 1056–cysteine 1068, cysteine 1058–cysteine 1075, cysteine 1077–cysteine 1086, cysteine 1089–cysteine 1099, cysteine 1102–cysteine 1114, cysteine 1104–cysteine 1130, cysteine 1132–cysteine 1141, and cysteine 1144–cysteine 1159. 8 consecutive Laminin EGF-like domains span residues 753-802, 803-860, 861-913, 914-962, 963-1009, 1010-1055, 1056-1101, and 1102-1161; these read CQCF…DCQP, CACP…SCQP, CQCN…NCQP, CRCN…GCLP, CNCN…GCIA, CDCS…GCKV, CNCS…LCTL, and CDCF…GCSS. The N-linked (GlcNAc...) asparagine glycan is linked to asparagine 919. N-linked (GlcNAc...) asparagine glycosylation occurs at asparagine 1031. The N-linked (GlcNAc...) asparagine glycan is linked to asparagine 1057. A Laminin EGF-like 14; first part domain is found at 1162–1171; that stretch reads CYCFGVTSQC. Residues 1172 to 1375 form the Laminin IV type A 2 domain; it reads SEAKGLIRTW…GSPPAHLIER (204 aa). The Laminin EGF-like 14; second part domain occupies 1376–1415; sequence CDCPPGYSGLSCETCAPGFYRLRSEPGGRTPGPTLGTCVP. 13 disulfide bridges follow: cysteine 1378-cysteine 1387, cysteine 1416-cysteine 1425, cysteine 1418-cysteine 1432, cysteine 1435-cysteine 1444, cysteine 1447-cysteine 1462, cysteine 1465-cysteine 1480, cysteine 1467-cysteine 1490, cysteine 1493-cysteine 1502, cysteine 1505-cysteine 1520, cysteine 1523-cysteine 1535, cysteine 1525-cysteine 1542, cysteine 1544-cysteine 1553, and cysteine 1556-cysteine 1567. Laminin EGF-like domains lie at 1416-1464, 1465-1522, and 1523-1569; these read CQCN…DCQP, CACP…SCQE, and CECD…ECVF. The domain II and I stretch occupies residues 1570 to 2140; that stretch reads CGDECTGLLL…NQARKQANSI (571 aa). N-linked (GlcNAc...) asparagine glycans are attached at residues asparagine 1593, asparagine 1610, asparagine 1696, asparagine 1806, asparagine 1897, asparagine 1912, asparagine 1916, asparagine 2013, asparagine 2024, asparagine 2041, asparagine 2122, and asparagine 2236. A coiled-coil region spans residues 1662-1863; that stretch reads QDAERTNSRA…DIKTKLPPMS (202 aa). Positions 1923 to 2146 form a coiled coil; it reads AYSNIKDYID…ANSIKVSVSS (224 aa). 5 consecutive Laminin G-like domains span residues 2141–2324, 2336–2517, 2522–2706, 2759–2930, and 2929–3115; these read KVSV…CKGC, TIQF…TKGC, VYTV…IGRC, SKQF…VGTC, and TCFA…PVSC. Cysteine 2298 and cysteine 2324 are disulfide-bonded. N-linked (GlcNAc...) asparagine glycans are attached at residues asparagine 2356, asparagine 2431, and asparagine 2474. Cysteine 2491 and cysteine 2517 are disulfide-bonded. Asparagine 2547, asparagine 2554, and asparagine 2644 each carry an N-linked (GlcNAc...) asparagine glycan. Residues cysteine 2679 and cysteine 2706 are joined by a disulfide bond. N-linked (GlcNAc...) asparagine glycosylation occurs at asparagine 2889. Cystine bridges form between cysteine 2905–cysteine 2930 and cysteine 3083–cysteine 3115.

As to quaternary structure, laminin is a complex glycoprotein, consisting of three different polypeptide chains (alpha, beta, gamma), which are bound to each other by disulfide bonds into a cross-shaped molecule comprising one long and three short arms with globules at each end. Alpha-2 is a subunit of laminin-2 (laminin-211 or merosin), laminin-4 (laminin-221 or S-merosin) and laminin-12 (laminin-213). Interacts with FBLN1, FBLN2 and NID2.

The protein localises to the secreted. It localises to the extracellular space. The protein resides in the extracellular matrix. It is found in the basement membrane. Binding to cells via a high affinity receptor, laminin is thought to mediate the attachment, migration and organization of cells into tissues during embryonic development by interacting with other extracellular matrix components. The sequence is that of Laminin subunit alpha-2 (Lama2) from Mus musculus (Mouse).